The primary structure comprises 263 residues: Ubiquinone/menaquinone biosynthesis C-methyltransferase UbiE (263 aa).

S-adenosyl-L-methionine-binding residues include Thr86, Asp107, and Ser152.

Belongs to the class I-like SAM-binding methyltransferase superfamily. MenG/UbiE family.

It catalyses the reaction a 2-demethylmenaquinol + S-adenosyl-L-methionine = a menaquinol + S-adenosyl-L-homocysteine + H(+). It carries out the reaction a 2-methoxy-6-(all-trans-polyprenyl)benzene-1,4-diol + S-adenosyl-L-methionine = a 5-methoxy-2-methyl-3-(all-trans-polyprenyl)benzene-1,4-diol + S-adenosyl-L-homocysteine + H(+). It functions in the pathway quinol/quinone metabolism; menaquinone biosynthesis; menaquinol from 1,4-dihydroxy-2-naphthoate: step 2/2. The protein operates within cofactor biosynthesis; ubiquinone biosynthesis. Its function is as follows. Methyltransferase required for the conversion of demethylmenaquinol (DMKH2) to menaquinol (MKH2) and the conversion of 2-polyprenyl-6-methoxy-1,4-benzoquinol (DDMQH2) to 2-polyprenyl-3-methyl-6-methoxy-1,4-benzoquinol (DMQH2). The sequence is that of Ubiquinone/menaquinone biosynthesis C-methyltransferase UbiE from Brucella anthropi (strain ATCC 49188 / DSM 6882 / CCUG 24695 / JCM 21032 / LMG 3331 / NBRC 15819 / NCTC 12168 / Alc 37) (Ochrobactrum anthropi).